Here is a 295-residue protein sequence, read N- to C-terminus: ATP synthase gamma chain (295 aa).

This sequence belongs to the ATPase gamma chain family. As to quaternary structure, F-type ATPases have 2 components, CF(1) - the catalytic core - and CF(0) - the membrane proton channel. CF(1) has five subunits: alpha(3), beta(3), gamma(1), delta(1), epsilon(1). CF(0) has three main subunits: a, b and c.

The protein resides in the cell membrane. In terms of biological role, produces ATP from ADP in the presence of a proton gradient across the membrane. The gamma chain is believed to be important in regulating ATPase activity and the flow of protons through the CF(0) complex. In Herpetosiphon aurantiacus (strain ATCC 23779 / DSM 785 / 114-95), this protein is ATP synthase gamma chain.